The primary structure comprises 218 residues: MSNLSPEAIKVRNALVEKGIETPMIDLVQDKDQRRQGIEQHMREVIKLIGLDLSDDSLEETPARLSKMFIDEIFSGLDYANFPKITNIENRMKVSEMVLVDDVTLTSTCEHHFVTIDGKVSVAYYPQKWVIGLSKINRVVAFFAQRPQVQERLTQQILLAFQTILETEDVAVYVKATHFCVKCRGIKDTNSYTVTSAFGGVFLDDRETRKEFLTLLKK.

Zn(2+) is bound by residues cysteine 109, histidine 112, and cysteine 180.

The protein belongs to the GTP cyclohydrolase I family. As to quaternary structure, toroid-shaped homodecamer, composed of two pentamers of five dimers.

It catalyses the reaction GTP + H2O = 7,8-dihydroneopterin 3'-triphosphate + formate + H(+). It participates in cofactor biosynthesis; 7,8-dihydroneopterin triphosphate biosynthesis; 7,8-dihydroneopterin triphosphate from GTP: step 1/1. The chain is GTP cyclohydrolase 1 from Histophilus somni (strain 129Pt) (Haemophilus somnus).